The primary structure comprises 127 residues: Aspartate 1-decarboxylase (127 aa).

Ser-25 acts as the Schiff-base intermediate with substrate; via pyruvic acid in catalysis. A Pyruvic acid (Ser) modification is found at Ser-25. A substrate-binding site is contributed by Thr-57. The active-site Proton donor is the Tyr-58. 73–75 is a substrate binding site; it reads GAA.

This sequence belongs to the PanD family. Heterooctamer of four alpha and four beta subunits. Pyruvate serves as cofactor. Is synthesized initially as an inactive proenzyme, which is activated by self-cleavage at a specific serine bond to produce a beta-subunit with a hydroxyl group at its C-terminus and an alpha-subunit with a pyruvoyl group at its N-terminus.

It localises to the cytoplasm. It carries out the reaction L-aspartate + H(+) = beta-alanine + CO2. It functions in the pathway cofactor biosynthesis; (R)-pantothenate biosynthesis; beta-alanine from L-aspartate: step 1/1. Catalyzes the pyruvoyl-dependent decarboxylation of aspartate to produce beta-alanine. This chain is Aspartate 1-decarboxylase, found in Neisseria meningitidis serogroup A / serotype 4A (strain DSM 15465 / Z2491).